Consider the following 600-residue polypeptide: NADH-quinone oxidoreductase subunit C/D (600 aa).

The segment at 1–190 (MVNNMTDLTA…SPFELTKAKQ (190 aa)) is NADH dehydrogenase I subunit C. An NADH dehydrogenase I subunit D region spans residues 214-600 (DFMFLNLGPN…IDFVMSDVDR (387 aa)).

This sequence in the N-terminal section; belongs to the complex I 30 kDa subunit family. It in the C-terminal section; belongs to the complex I 49 kDa subunit family. NDH-1 is composed of 13 different subunits. Subunits NuoB, CD, E, F, and G constitute the peripheral sector of the complex.

The protein resides in the cell inner membrane. It catalyses the reaction a quinone + NADH + 5 H(+)(in) = a quinol + NAD(+) + 4 H(+)(out). NDH-1 shuttles electrons from NADH, via FMN and iron-sulfur (Fe-S) centers, to quinones in the respiratory chain. The immediate electron acceptor for the enzyme in this species is believed to be ubiquinone. Couples the redox reaction to proton translocation (for every two electrons transferred, four hydrogen ions are translocated across the cytoplasmic membrane), and thus conserves the redox energy in a proton gradient. The chain is NADH-quinone oxidoreductase subunit C/D from Escherichia coli O127:H6 (strain E2348/69 / EPEC).